Here is a 397-residue protein sequence, read N- to C-terminus: Argininosuccinate synthase (397 aa).

Position 9–17 (9–17) interacts with ATP; the sequence is AYSGGLDTS. Tyr86 is an L-citrulline binding site. Gly116 contributes to the ATP binding site. 3 residues coordinate L-aspartate: Thr118, Asn122, and Asp123. Asn122 contributes to the L-citrulline binding site. L-citrulline-binding residues include Arg126, Ser174, Glu259, and Tyr271.

The protein belongs to the argininosuccinate synthase family. Type 1 subfamily. Homotetramer.

The protein resides in the cytoplasm. The catalysed reaction is L-citrulline + L-aspartate + ATP = 2-(N(omega)-L-arginino)succinate + AMP + diphosphate + H(+). The protein operates within amino-acid biosynthesis; L-arginine biosynthesis; L-arginine from L-ornithine and carbamoyl phosphate: step 2/3. In Lactococcus lactis subsp. cremoris (strain MG1363), this protein is Argininosuccinate synthase.